Here is a 444-residue protein sequence, read N- to C-terminus: MFS-type transporter dbaD (444 aa).

Polar residues predominate over residues 1 to 13 (MTEQPPQNHSVDL). Residues 1 to 57 (MTEQPPQNHSVDLNQNEDNNENDYRSSSATDAERPCEPKIEESTAKPPTGPPAPPPP) form a disordered region. Residue N8 is glycosylated (N-linked (GlcNAc...) asparagine). The segment covering 31–44 (DAERPCEPKIEEST) has biased composition (basic and acidic residues). A compositionally biased stretch (pro residues) spans 48–57 (PTGPPAPPPP). 11 helical membrane-spanning segments follow: residues 62–82 (LVAW…WGIM), 107–127 (WIGS…GSIY), 134–154 (ALLV…SLCK), 159–179 (VLLA…VPCV), 192–212 (TALG…PIVL), 223–243 (WSVR…IAVM), 267–287 (MAFT…LFYI), 301–323 (MAFY…PNAM), 330–350 (FNLI…LLAV), 356–376 (LIVI…LPPL), and 394–414 (MGFG…GAIL). Residue N421 is glycosylated (N-linked (GlcNAc...) asparagine). The chain crosses the membrane as a helical span at residues 424 to 444 (GLWVYGGVTSLVAGFIICIAV).

The protein belongs to the major facilitator superfamily. Monocarboxylate porter (TC 2.A.1.13) family.

It is found in the cell membrane. In terms of biological role, MFS-type transporter; part of the gene cluster that mediates the biosynthesis of the antibiotic 2,4- dihydroxy-3-methyl-6-(2-oxopropyl)benzaldehyde (DHMBA) and its derivatives. Is probably involved in the transport of the metabolites to the environment. The polypeptide is MFS-type transporter dbaD (Emericella nidulans (strain FGSC A4 / ATCC 38163 / CBS 112.46 / NRRL 194 / M139) (Aspergillus nidulans)).